The primary structure comprises 115 residues: Large ribosomal subunit protein uL24 (115 aa).

Disordered regions lie at residues 45–77 and 96–115; these read VRQS…STGK and KASG…KAAS.

Belongs to the universal ribosomal protein uL24 family. As to quaternary structure, part of the 50S ribosomal subunit.

In terms of biological role, one of two assembly initiator proteins, it binds directly to the 5'-end of the 23S rRNA, where it nucleates assembly of the 50S subunit. Functionally, one of the proteins that surrounds the polypeptide exit tunnel on the outside of the subunit. In Rhodopirellula baltica (strain DSM 10527 / NCIMB 13988 / SH1), this protein is Large ribosomal subunit protein uL24.